The sequence spans 66 residues: Beta-toxin ChFII.9 (66 aa).

An LCN-type CS-alpha/beta domain is found at 1-66; the sequence is KEGYIVDYHT…VWPLPNKRCK (66 aa). 4 disulfides stabilise this stretch: cysteine 12–cysteine 65, cysteine 16–cysteine 41, cysteine 25–cysteine 46, and cysteine 29–cysteine 48. Lysine 66 carries the post-translational modification Lysine amide.

Expressed by the venom gland.

It is found in the secreted. In terms of biological role, beta toxins bind voltage independently at site-4 of sodium channels (Nav) and shift the activation voltage toward more negative potentials, thereby affecting sodium channel activation CC and promoting spontaneous and repetitive firing. The protein is Beta-toxin ChFII.9 of Centruroides hirsutipalpus (Scorpion).